Reading from the N-terminus, the 129-residue chain is Small ribosomal subunit protein uS11 (129 aa).

Belongs to the universal ribosomal protein uS11 family. In terms of assembly, part of the 30S ribosomal subunit. Interacts with proteins S7 and S18. Binds to IF-3.

Located on the platform of the 30S subunit, it bridges several disparate RNA helices of the 16S rRNA. Forms part of the Shine-Dalgarno cleft in the 70S ribosome. In Francisella tularensis subsp. mediasiatica (strain FSC147), this protein is Small ribosomal subunit protein uS11.